Reading from the N-terminus, the 156-residue chain is 6,7-dimethyl-8-ribityllumazine synthase (156 aa).

5-amino-6-(D-ribitylamino)uracil contacts are provided by residues phenylalanine 22, 57 to 59 (AYE), and 81 to 83 (TVI). Residue 86-87 (GT) coordinates (2S)-2-hydroxy-3-oxobutyl phosphate. Residue histidine 89 is the Proton donor of the active site. 5-amino-6-(D-ribitylamino)uracil is bound at residue phenylalanine 114. Residue arginine 128 participates in (2S)-2-hydroxy-3-oxobutyl phosphate binding.

It belongs to the DMRL synthase family. As to quaternary structure, forms an icosahedral capsid composed of 60 subunits, arranged as a dodecamer of pentamers.

The catalysed reaction is (2S)-2-hydroxy-3-oxobutyl phosphate + 5-amino-6-(D-ribitylamino)uracil = 6,7-dimethyl-8-(1-D-ribityl)lumazine + phosphate + 2 H2O + H(+). It functions in the pathway cofactor biosynthesis; riboflavin biosynthesis; riboflavin from 2-hydroxy-3-oxobutyl phosphate and 5-amino-6-(D-ribitylamino)uracil: step 1/2. Its function is as follows. Catalyzes the formation of 6,7-dimethyl-8-ribityllumazine by condensation of 5-amino-6-(D-ribitylamino)uracil with 3,4-dihydroxy-2-butanone 4-phosphate. This is the penultimate step in the biosynthesis of riboflavin. The polypeptide is 6,7-dimethyl-8-ribityllumazine synthase (Yersinia enterocolitica serotype O:8 / biotype 1B (strain NCTC 13174 / 8081)).